A 101-amino-acid polypeptide reads, in one-letter code: Venom protein 214 (101 aa).

The signal sequence occupies residues 1-16 (MIRYVLVIITCFLVAA).

Post-translationally, contains 3 disulfide bonds. As to expression, expressed by the venom gland.

Its subcellular location is the secreted. This is Venom protein 214 from Lychas mucronatus (Chinese swimming scorpion).